The chain runs to 496 residues: Splicing factor U2AF 65 kDa subunit (496 aa).

The segment covering Met-1–Gly-26 has biased composition (basic and acidic residues). A disordered region spans residues Met-1–Pro-142. The segment covering Lys-59–Ser-77 has biased composition (basic residues). Basic and acidic residues-rich tracts occupy residues Arg-78 to Arg-96 and Gly-105 to Phe-138. RRM domains follow at residues Arg-184–Asp-266, Asn-291–Ala-368, and Asn-404–Val-488.

Forms a heterodimer with the U2AF small subunit.

It is found in the nucleus. Functionally, necessary for the splicing of pre-mRNA. Binds to the polypyrimidine tract of introns early during spliceosome assembly. The chain is Splicing factor U2AF 65 kDa subunit (uaf-1) from Caenorhabditis elegans.